A 337-amino-acid chain; its full sequence is Ribonucleoside-diphosphate reductase small subunit (337 aa).

The tract at residues Met-1–Ala-22 is disordered. 3 residues coordinate Fe cation: Asp-91, Glu-121, and His-124. Residue Tyr-128 is part of the active site. A helical transmembrane segment spans residues Phe-177–Tyr-197. Residues Glu-184, Glu-218, and His-221 each contribute to the Fe cation site.

It belongs to the ribonucleoside diphosphate reductase small chain family. Heterotetramer composed of a homodimer of the large subunit (R1) and a homodimer of the small subunit (R2). Larger multisubunit protein complex are also active, composed of (R1)n(R2)n. It depends on Fe cation as a cofactor.

The protein localises to the host membrane. It carries out the reaction a 2'-deoxyribonucleoside 5'-diphosphate + [thioredoxin]-disulfide + H2O = a ribonucleoside 5'-diphosphate + [thioredoxin]-dithiol. In terms of biological role, ribonucleoside-diphosphate reductase holoenzyme provides the precursors necessary for viral DNA synthesis. Allows virus growth in non-dividing cells, as well as reactivation from latency in infected hosts. Catalyzes the biosynthesis of deoxyribonucleotides from the corresponding ribonucleotides. The chain is Ribonucleoside-diphosphate reductase small subunit from Human herpesvirus 2 (strain 333) (HHV-2).